A 1415-amino-acid chain; its full sequence is Zygote defective protein 9 (1415 aa).

TOG stretches follow at residues 1-250 (MSNW…AKNA) and 251-530 (PPVA…AGPA). A coiled-coil region spans residues 21-48 (DELRESKKWQERKEALEALLKVLTDNER). HEAT repeat units follow at residues 30–68 (QERK…VLAK), 95–132 (SFAG…TMQS), 135–172 (TGQE…AKQP), and 179–217 (VVPV…VKNL). The disordered stretch occupies residues 243–278 (AEEQAKNAPPVAPTSSTPSASAASGDPSGGTATAVV). Residues 255 to 276 (PTSSTPSASAASGDPSGGTATA) are compositionally biased toward low complexity. HEAT repeat units lie at residues 339–377 (ANYG…GLRT), 381–418 (PFAV…TTNL), 420–457 (AVGE…QTMP), and 464–502 (LIPS…SLQL). The tract at residues 544-603 (APPAAAPPKKTAPPKKQPEDEEVVEEEDEPLKPPPGDKKKKVPVKENEENEPPVVAPKAE) is disordered. The span at 562-572 (EDEEVVEEEDE) shows a compositional bias: acidic residues. Residues 602 to 867 (AELLLSDNED…VEERIKRTGV (266 aa)) are TOG 3. 3 HEAT repeats span residues 706 to 743 (IKVL…LKTG), 764 to 801 (VGPL…NAGI), and 804 to 841 (LKSL…FEGD). The disordered stretch occupies residues 867-914 (VKPGSGVVTSPPTGGPKILVPQQQGSVVRRPASRSRTREPEPEEVQSD).

This sequence belongs to the TOG/XMAP215 family. In terms of assembly, interacts with tac-1 to form a heterodimer.

The protein localises to the cytoplasm. Its subcellular location is the cytoskeleton. It localises to the spindle pole. The protein resides in the microtubule organizing center. It is found in the centrosome. Its function is as follows. Plays a major role in organizing microtubules and spindle poles during mitosis and meiosis in one-cell stage embryos. Required for default nucleus positioning in oocytes. This chain is Zygote defective protein 9, found in Caenorhabditis elegans.